The following is a 163-amino-acid chain: Photosystem II extrinsic protein V (163 aa).

Residues M1–A26 form the signal peptide. Heme c contacts are provided by C63, C66, H67, and H118.

The protein belongs to the cytochrome c family. PsbV subfamily. PSII is composed of 1 copy each of membrane proteins PsbA, PsbB, PsbC, PsbD, PsbE, PsbF, PsbH, PsbI, PsbJ, PsbK, PsbL, PsbM, PsbT, PsbX, PsbY, PsbZ, Psb30/Ycf12, peripheral proteins PsbO, CyanoQ (PsbQ), PsbU, PsbV and a large number of cofactors. It forms dimeric complexes. It depends on heme c as a cofactor.

It is found in the cellular thylakoid membrane. One of the extrinsic, lumenal subunits of photosystem II (PSII). PSII is a light-driven water plastoquinone oxidoreductase, using light energy to abstract electrons from H(2)O, generating a proton gradient subsequently used for ATP formation. The extrinsic proteins stabilize the structure of photosystem II oxygen-evolving complex (OEC), the ion environment of oxygen evolution and protect the OEC against heat-induced inactivation. Low-potential cytochrome c that plays a role in the OEC of PSII. This is Photosystem II extrinsic protein V from Trichormus variabilis (strain ATCC 29413 / PCC 7937) (Anabaena variabilis).